Consider the following 348-residue polypeptide: Sulfate/thiosulfate import ATP-binding protein CysA (348 aa).

Residues Ile3–Ile237 enclose the ABC transporter domain. Residue Gly35–Thr42 coordinates ATP.

It belongs to the ABC transporter superfamily. Sulfate/tungstate importer (TC 3.A.1.6) family. In terms of assembly, the complex is composed of two ATP-binding proteins (CysA), two transmembrane proteins (CysT and CysW) and a solute-binding protein (CysP).

Its subcellular location is the cell inner membrane. The enzyme catalyses sulfate(out) + ATP + H2O = sulfate(in) + ADP + phosphate + H(+). It catalyses the reaction thiosulfate(out) + ATP + H2O = thiosulfate(in) + ADP + phosphate + H(+). Part of the ABC transporter complex CysAWTP involved in sulfate/thiosulfate import. Responsible for energy coupling to the transport system. The protein is Sulfate/thiosulfate import ATP-binding protein CysA of Methylococcus capsulatus (strain ATCC 33009 / NCIMB 11132 / Bath).